Here is a 354-residue protein sequence, read N- to C-terminus: Putrescine/cadaverine-binding protein (354 aa).

The signal sequence occupies residues 1 to 20 (MMKKLLLVATLMAGAAQATA).

This sequence belongs to the bacterial solute-binding protein 1 family.

The protein localises to the periplasm. Binds putrescine and cadaverine. The protein is Putrescine/cadaverine-binding protein of Pseudomonas aeruginosa (strain ATCC 15692 / DSM 22644 / CIP 104116 / JCM 14847 / LMG 12228 / 1C / PRS 101 / PAO1).